The sequence spans 419 residues: DNA ligase (419 aa).

The NTD stretch occupies residues 1–120 (MLSQFPGQCS…ARQKRGAHTN (120 aa)). Residues 121–317 (RGMIPPMLVK…NYHSPHLAKL (197 aa)) form an AD domain region. Residues histidine 149, lysine 151, glutamate 203, and phenylalanine 232 each coordinate ATP. Lysine 151 functions as the N6-AMP-lysine intermediate in the catalytic mechanism. A divalent metal cation is bound at residue glutamate 203. Residue glutamate 291 participates in a divalent metal cation binding. Isoleucine 294 and lysine 316 together coordinate ATP. The tract at residues 318–419 (KPLLDAEFIL…REPINVLEII (102 aa)) is OB domain.

This sequence belongs to the ATP-dependent DNA ligase family. A divalent metal cation serves as cofactor.

The protein localises to the virion. It catalyses the reaction ATP + (deoxyribonucleotide)n-3'-hydroxyl + 5'-phospho-(deoxyribonucleotide)m = (deoxyribonucleotide)n+m + AMP + diphosphate.. In terms of biological role, very low-fidelity DNA ligase that seals nicks in double-stranded DNA during DNA repair. Together with the viral repair DNA polymerase X, fills the single nucleotide gaps generated by the AP endonuclease. It is not essential for viral replication and recombination. Displays a very low adenylation activity towards DNA with 3'-dideoxy- or 3'-amino-terminated nicks compared to regular nick DNA. This Ornithodoros (relapsing fever ticks) protein is DNA ligase (LIG).